The sequence spans 324 residues: NADH-ubiquinone oxidoreductase chain 1 (324 aa).

8 helical membrane-spanning segments follow: residues 9-29 (VLNP…LTLL), 75-95 (FLFL…WAPM), 106-126 (LGVL…LGSG), 146-166 (ISYE…TGGF), 177-197 (SIWL…STLA), 237-257 (ILLM…IPAL), 259-279 (ELTA…FLWV), and 299-319 (FLPM…ALAG).

The protein belongs to the complex I subunit 1 family.

It localises to the mitochondrion inner membrane. The enzyme catalyses a ubiquinone + NADH + 5 H(+)(in) = a ubiquinol + NAD(+) + 4 H(+)(out). Its function is as follows. Core subunit of the mitochondrial membrane respiratory chain NADH dehydrogenase (Complex I) that is believed to belong to the minimal assembly required for catalysis. Complex I functions in the transfer of electrons from NADH to the respiratory chain. The immediate electron acceptor for the enzyme is believed to be ubiquinone. This is NADH-ubiquinone oxidoreductase chain 1 (MT-ND1) from Thymallus arcticus (Arctic grayling).